A 216-amino-acid chain; its full sequence is UPF0502 protein Pfl01_3711 (216 aa).

This sequence belongs to the UPF0502 family.

This is UPF0502 protein Pfl01_3711 from Pseudomonas fluorescens (strain Pf0-1).